The chain runs to 158 residues: NAD(P)H-quinone oxidoreductase subunit J, chloroplastic (158 aa).

The protein belongs to the complex I 30 kDa subunit family. NDH is composed of at least 16 different subunits, 5 of which are encoded in the nucleus.

The protein localises to the plastid. Its subcellular location is the chloroplast thylakoid membrane. The catalysed reaction is a plastoquinone + NADH + (n+1) H(+)(in) = a plastoquinol + NAD(+) + n H(+)(out). The enzyme catalyses a plastoquinone + NADPH + (n+1) H(+)(in) = a plastoquinol + NADP(+) + n H(+)(out). In terms of biological role, NDH shuttles electrons from NAD(P)H:plastoquinone, via FMN and iron-sulfur (Fe-S) centers, to quinones in the photosynthetic chain and possibly in a chloroplast respiratory chain. The immediate electron acceptor for the enzyme in this species is believed to be plastoquinone. Couples the redox reaction to proton translocation, and thus conserves the redox energy in a proton gradient. The chain is NAD(P)H-quinone oxidoreductase subunit J, chloroplastic from Nuphar advena (Common spatterdock).